The chain runs to 178 residues: Interleukin-10 (178 aa).

The first 18 residues, 1–18 (MHSSALLCCLVLLTGVRA), serve as a signal peptide directing secretion. Disulfide bonds link Cys-30–Cys-126 and Cys-80–Cys-132. Asn-134 is a glycosylation site (N-linked (GlcNAc...) asparagine).

This sequence belongs to the IL-10 family. Homodimer. Interacts with IL10RA and IL10RB. Produced by a variety of cell lines, including T-cells, macrophages, mast cells and other cell types.

It is found in the secreted. Its function is as follows. Major immune regulatory cytokine that acts on many cells of the immune system where it has profound anti-inflammatory functions, limiting excessive tissue disruption caused by inflammation. Mechanistically, IL10 binds to its heterotetrameric receptor comprising IL10RA and IL10RB leading to JAK1 and STAT2-mediated phosphorylation of STAT3. In turn, STAT3 translocates to the nucleus where it drives expression of anti-inflammatory mediators. Targets antigen-presenting cells (APCs) such as macrophages and monocytes and inhibits their release of pro-inflammatory cytokines including granulocyte-macrophage colony-stimulating factor /GM-CSF, granulocyte colony-stimulating factor/G-CSF, IL-1 alpha, IL-1 beta, IL-6, IL-8 and TNF-alpha. Also interferes with antigen presentation by reducing the expression of MHC-class II and co-stimulatory molecules, thereby inhibiting their ability to induce T cell activation. In addition, controls the inflammatory response of macrophages by reprogramming essential metabolic pathways including mTOR signaling. The protein is Interleukin-10 (IL10) of Homo sapiens (Human).